The sequence spans 165 residues: uncharacterized protein (165 aa).

Positions 1-38 form a coiled coil; that stretch reads MFTVKEKNRQELEEELNDLEFQIYRMQENMKDLSKDAK.

This is an uncharacterized protein from Bacillus subtilis (strain 168).